The following is a 561-amino-acid chain: MAANEYDYIIVGAGSAGNVLASRLTEDADVTVLLLEAGGPDYRFDFRTQMPAALAFPLQGRRYNWAYETDPEPHMNNRRMECGRGKGLGGSSLINGMCYIRGNALDYDGWAAHAGLENWTYLDCLPYFRKAETRDAGANAYHGGDGPVHVTTSKPGNNPLFAAMVEAGVQAGFPRTDDLNGYQQEGFGPMDRTVTANGRRASTARGYLDRAKTRPNLTIVTHAVTDRVLFSGKRAVGVAYLHHGNAVNAQARREVLVCSGAIASPQLLQRSGVGRSTWLRELDVPLVHDLPGVGENLQDHLEMYIQYECKEPISLYPALQWWNQPAIGLEWMLKGTGIGASNQFEAGGFIRTRDDDLWPNIQYHFLPVAINYNGSNAIKMHGFQAHVGSMRSPSRGRVKLTSRDPNAHPSILFNYMADPLDWREFRDGIRITREIMRQPALDRYRGRELNPGAELTTDEQLDTFVRMRAETAFHPSCSCKMGYDDMAVVDNEGRVHGMEALRVVDASIMPRITTGNLNAPTIMLAEKIADRIHGREPLARVDTPYFVANGVASRKQESATV.

7 to 36 (DYIIVGAGSAGNVLASRLTEDADVTVLLLE) lines the FAD pocket. His474 acts as the Proton acceptor in catalysis.

This sequence belongs to the GMC oxidoreductase family. The cofactor is FAD.

It catalyses the reaction choline + A = betaine aldehyde + AH2. The catalysed reaction is betaine aldehyde + NAD(+) + H2O = glycine betaine + NADH + 2 H(+). It functions in the pathway amine and polyamine biosynthesis; betaine biosynthesis via choline pathway; betaine aldehyde from choline (cytochrome c reductase route): step 1/1. Involved in the biosynthesis of the osmoprotectant glycine betaine. Catalyzes the oxidation of choline to betaine aldehyde and betaine aldehyde to glycine betaine at the same rate. The sequence is that of Oxygen-dependent choline dehydrogenase from Paraburkholderia phytofirmans (strain DSM 17436 / LMG 22146 / PsJN) (Burkholderia phytofirmans).